Reading from the N-terminus, the 419-residue chain is Divergent protein kinase domain 1C (419 aa).

Topologically, residues 1–22 (MARAAGARGPAGWCRRRGRCGR) are cytoplasmic. The short motif at 16–17 (RR) is the May mediate ER retention element. Residues 23-43 (GTLLAFAAWTAGWVLAAALLL) traverse the membrane as a helical segment. At 44–419 (RAHPGVLSER…TLRELQEAEK (376 aa)) the chain is on the lumenal side.

The protein belongs to the DIPK family. In terms of processing, among the many cysteines in the lumenal domain, most are probably involved in disulfide bonds.

The protein resides in the endoplasmic reticulum membrane. This is Divergent protein kinase domain 1C from Homo sapiens (Human).